The chain runs to 1046 residues: UDP-N-acetylglucosamine--peptide N-acetylglucosaminyltransferase 110 kDa subunit (1046 aa).

N-acetylalanine is present on Ala-2. 2 positions are modified to phosphoserine; by GSK3-beta; alternate: Ser-3 and Ser-4. Residues Ser-3 and Ser-4 are each glycosylated (O-linked (GlcNAc) serine; alternate). Position 20 is a phosphoserine (Ser-20). 12 TPR repeats span residues 21-54 (FQGL…EPDN), 89-122 (AEAY…KPDF), 123-156 (IDGY…NPDL), 157-190 (YCVR…QPNF), 191-224 (AVAW…DPNF), 225-258 (LDAY…SPNH), 259-292 (AVVH…QPHF), 293-326 (PDAY…CPTH), 327-360 (ADSL…FPEF), 361-394 (AAAH…SPTF), 395-428 (ADAY…NPAF), and 429-462 (ADAH…KPDF). O-linked (GlcNAc) serine; by autocatalysis glycosylation occurs at Ser-399. Position 454 is a phosphothreonine (Thr-454). The TPR 13; truncated repeat unit spans residues 463–473 (PDAYCNLAHCL). Positions 464-466 (DAY) match the DFP motif motif. A Nuclear localization signal motif is present at residues 487–503 (KKLVSIVADQLEKNRLP). Catalysis depends on His-508, which acts as the Proton acceptor. Residues Gln-849, Lys-852, 906-908 (APK), 911-914 (HVRR), 930-932 (HTT), and Asp-935 each bind UDP. Position 989 is a phosphotyrosine (Tyr-989). Residues 991-1010 (KKIRGKVWKQRISSPLFNTK) are required for phosphatidylinositol 3,4,5-triphosphate binding.

This sequence belongs to the glycosyltransferase 41 family. O-GlcNAc transferase subfamily. In terms of assembly, monomer; may exist in different oligomerization states in cells. Homotrimer, oligomerizes via TPR repeats 6 and 7. Trimerization is not necessary for activity in vitro, however it increases affinity for UDP-GlcNAc. Component of a THAP1/THAP3-HCFC1-OGT complex. Component of the NSL complex at least composed of MOF/KAT8, KANSL1, KANSL2, KANSL3, MCRS1, PHF20, OGT1/OGT, WDR5 and HCFC1. Found in a complex with KIF5B, RHOT1, RHOT2 and TRAK1. Found in a complex composed of at least SINHCAF, SIN3A, HDAC1, SAP30, RBBP4, OGT and TET1. Component of a complex composed of KMT2E/MLL5, OGT and USP7; the complex stabilizes KMT2E/MLL5, preventing KMT2E/MLL5 ubiquitination and proteasomal-mediated degradation. Interacts (via TPRs 1-6) with SIN3A; the interaction mediates transcriptional repression in parallel with histone deacetylase. Interacts (via TPR 5-6) with TET1, TET2 and TET3. Interacts (via TPR repeats 6 and 7) with ATXN10. Interacts with NSD2. Interacts with PROSER1; this interaction mediates TET2 O-GlcNAcylation and stability by promoting the interaction between OGT and TET2. In terms of processing, ubiquitinated by the SCF(FBXO31) complex, leading to its proteasomal degradation. Post-translationally, phosphorylation on Ser-3 or Ser-4 by GSK3-beta positively regulates its activity. Phosphorylation at Thr-454 by AMPK promotes nuclear localization. Glycosylated via autocatalysis; O-GlcNAcylation at Ser-399 promotes nuclear localization.

The protein resides in the nucleus. It is found in the cytoplasm. The catalysed reaction is L-seryl-[protein] + UDP-N-acetyl-alpha-D-glucosamine = 3-O-(N-acetyl-beta-D-glucosaminyl)-L-seryl-[protein] + UDP + H(+). It carries out the reaction L-threonyl-[protein] + UDP-N-acetyl-alpha-D-glucosamine = 3-O-(N-acetyl-beta-D-glucosaminyl)-L-threonyl-[protein] + UDP + H(+). Its pathway is protein modification; protein glycosylation. With respect to regulation, inhibited by UDP. Catalyzes the transfer of a single N-acetylglucosamine from UDP-GlcNAc to a serine or threonine residue in cytoplasmic and nuclear proteins resulting in their modification with a beta-linked N-acetylglucosamine (O-GlcNAc). Glycosylates a large and diverse number of proteins including histone H2B, AKT1, AMPK, ATG4B, CAPRIN1, EZH2, FNIP1, GSDMD, KRT7, LMNA, LMNB1, LMNB2, RPTOR, HOXA1, PFKL, KMT2E/MLL5, MAPT/TAU, TET2, RBL2, RET, NOD2 and HCFC1. Can regulate their cellular processes via cross-talk between glycosylation and phosphorylation or by affecting proteolytic processing. Involved in insulin resistance in muscle and adipocyte cells via glycosylating insulin signaling components and inhibiting the 'Thr-308' phosphorylation of AKT1, enhancing IRS1 phosphorylation and attenuating insulin signaling. Involved in glycolysis regulation by mediating glycosylation of 6-phosphofructokinase PFKL, inhibiting its activity. Plays a key role in chromatin structure by mediating O-GlcNAcylation of 'Ser-112' of histone H2B: recruited to CpG-rich transcription start sites of active genes via its interaction with TET proteins (TET1, TET2 or TET3). As part of the NSL complex indirectly involved in acetylation of nucleosomal histone H4 on several lysine residues. O-GlcNAcylation of 'Ser-75' of EZH2 increases its stability, and facilitating the formation of H3K27me3 by the PRC2/EED-EZH2 complex. Stabilizes KMT2E/MLL5 by mediating its glycosylation, thereby preventing KMT2E/MLL5 ubiquitination. Regulates circadian oscillation of the clock genes and glucose homeostasis in the liver. Stabilizes clock proteins BMAL1 and CLOCK through O-glycosylation, which prevents their ubiquitination and subsequent degradation. Promotes the CLOCK-BMAL1-mediated transcription of genes in the negative loop of the circadian clock such as PER1/2 and CRY1/2. O-glycosylates HCFC1 and regulates its proteolytic processing and transcriptional activity. Component of a THAP1/THAP3-HCFC1-OGT complex that is required for the regulation of the transcriptional activity of RRM1. Regulates mitochondrial motility in neurons by mediating glycosylation of TRAK1. Promotes autophagy by mediating O-glycosylation of ATG4B. Acts as a regulator of mTORC1 signaling by mediating O-glycosylation of RPTOR and FNIP1: O-GlcNAcylation of RPTOR in response to glucose sufficiency promotes activation of the mTORC1 complex. Functionally, catalyzes the transfer of a single N-acetylglucosamine from UDP-GlcNAc to a serine or threonine residue. Acts on cytoplasmic and nuclear proteins resulting in their modification with a beta-linked N-acetylglucosamine (O-GlcNAc). Glycosylates a large and diverse number of proteins including histone H2B, AKT1, ATG4B, EZH2, PFKL, KMT2E/MLL5, MAPT/TAU, NOD2 and HCFC1. Can regulate their cellular processes via cross-talk between glycosylation and phosphorylation or by affecting proteolytic processing. Probably by glycosylating KMT2E/MLL5, stabilizes KMT2E/MLL5 by preventing its ubiquitination. Involved in insulin resistance in muscle and adipocyte cells via glycosylating insulin signaling components and inhibiting the 'Thr-308' phosphorylation of AKT1, enhancing IRS1 phosphorylation and attenuating insulin signaling. Involved in glycolysis regulation by mediating glycosylation of 6-phosphofructokinase PFKL, inhibiting its activity. Component of a THAP1/THAP3-HCFC1-OGT complex that is required for the regulation of the transcriptional activity of RRM1. Plays a key role in chromatin structure by mediating O-GlcNAcylation of 'Ser-112' of histone H2B: recruited to CpG-rich transcription start sites of active genes via its interaction with TET proteins (TET1, TET2 or TET3). As part of the NSL complex indirectly involved in acetylation of nucleosomal histone H4 on several lysine residues. O-GlcNAcylation of 'Ser-75' of EZH2 increases its stability, and facilitating the formation of H3K27me3 by the PRC2/EED-EZH2 complex. Regulates circadian oscillation of the clock genes and glucose homeostasis in the liver. Stabilizes clock proteins BMAL1 and CLOCK through O-glycosylation, which prevents their ubiquitination and subsequent degradation. Promotes the CLOCK-BMAL1-mediated transcription of genes in the negative loop of the circadian clock such as PER1/2 and CRY1/2. O-glycosylates HCFC1 and regulates its proteolytic processing and transcriptional activity. Regulates mitochondrial motility in neurons by mediating glycosylation of TRAK1. Glycosylates HOXA1. O-glycosylates FNIP1. Promotes autophagy by mediating O-glycosylation of ATG4B. The sequence is that of UDP-N-acetylglucosamine--peptide N-acetylglucosaminyltransferase 110 kDa subunit (OGT) from Oryctolagus cuniculus (Rabbit).